The sequence spans 311 residues: Formimidoylglutamase (311 aa).

Positions 130, 155, 157, 159, 242, and 244 each coordinate Mn(2+).

The protein belongs to the arginase family. Mn(2+) serves as cofactor.

The enzyme catalyses N-formimidoyl-L-glutamate + H2O = formamide + L-glutamate. It participates in amino-acid degradation; L-histidine degradation into L-glutamate; L-glutamate from N-formimidoyl-L-glutamate (hydrolase route): step 1/1. Its function is as follows. Catalyzes the conversion of N-formimidoyl-L-glutamate to L-glutamate and formamide. In Staphylococcus aureus (strain MSSA476), this protein is Formimidoylglutamase.